A 202-amino-acid chain; its full sequence is Thymidylate kinase (202 aa).

7-14 contacts ATP; sequence GIDGSGKT.

The protein belongs to the thymidylate kinase family.

It catalyses the reaction dTMP + ATP = dTDP + ADP. Its function is as follows. Phosphorylation of dTMP to form dTDP in both de novo and salvage pathways of dTTP synthesis. The polypeptide is Thymidylate kinase (Ehrlichia canis (strain Jake)).